The primary structure comprises 80 residues: Exodeoxyribonuclease 7 small subunit (80 aa).

Belongs to the XseB family. As to quaternary structure, heterooligomer composed of large and small subunits.

The protein resides in the cytoplasm. The catalysed reaction is Exonucleolytic cleavage in either 5'- to 3'- or 3'- to 5'-direction to yield nucleoside 5'-phosphates.. Its function is as follows. Bidirectionally degrades single-stranded DNA into large acid-insoluble oligonucleotides, which are then degraded further into small acid-soluble oligonucleotides. The polypeptide is Exodeoxyribonuclease 7 small subunit (Photobacterium profundum (strain SS9)).